The chain runs to 75 residues: Small integral membrane protein 7 (75 aa).

Residues 1 to 17 (MIGDILLFGTLLMNAGA) form the signal peptide. The Extracellular segment spans residues 18-53 (VLNFKLKKKDTQGFGEESREPSTGDNIREFLLSLRY). A helical transmembrane segment spans residues 54–74 (FRIFIALWNIFMMFCMIVLFG). Ser75 is a topological domain (cytoplasmic).

This sequence belongs to the SMIM7 family.

The protein localises to the membrane. The protein is Small integral membrane protein 7 (SMIM7) of Homo sapiens (Human).